Consider the following 263-residue polypeptide: Tryptophan synthase alpha chain (263 aa).

Active-site proton acceptor residues include Glu-41 and Asp-52.

Belongs to the TrpA family. As to quaternary structure, tetramer of two alpha and two beta chains.

The enzyme catalyses (1S,2R)-1-C-(indol-3-yl)glycerol 3-phosphate + L-serine = D-glyceraldehyde 3-phosphate + L-tryptophan + H2O. Its pathway is amino-acid biosynthesis; L-tryptophan biosynthesis; L-tryptophan from chorismate: step 5/5. In terms of biological role, the alpha subunit is responsible for the aldol cleavage of indoleglycerol phosphate to indole and glyceraldehyde 3-phosphate. The sequence is that of Tryptophan synthase alpha chain from Geobacillus sp. (strain WCH70).